The following is a 492-amino-acid chain: uncharacterized protein (492 aa).

Belongs to the FGGY kinase family.

This is an uncharacterized protein from Escherichia coli (strain K12).